A 180-amino-acid polypeptide reads, in one-letter code: Succinate dehydrogenase cytochrome B subunit, mitochondrial (180 aa).

At 1 to 82 (MFATRSFCLS…WYLSSLHRIT (82 aa)) the chain is on the mitochondrial matrix side. A helical transmembrane segment spans residues 83-103 (GCVVAGTLYAFAMGYLVAPLA). Over 104–122 (GYSLDTATISGLIQQVPTW) the chain is Mitochondrial intermembrane. The helical transmembrane segment at 123–143 (IKVPAKFVISYPLTFHIFNGI) threads the bilayer. Residue His-138 participates in heme binding. The Mitochondrial matrix portion of the chain corresponds to 144-159 (RHLIWDTTKELSLKGV). A helical transmembrane segment spans residues 160 to 180 (YRTGYAVLALSVLTSGYFAMI).

This sequence belongs to the cytochrome b560 family. As to quaternary structure, forms part of complex II containing four subunits: a 70 kDa flavoprotein (FP), a 27 kDa iron-sulfur protein (IP), a cytochrome B and a membrane-anchoring protein. The cofactor is heme.

The protein localises to the mitochondrion inner membrane. It participates in carbohydrate metabolism; tricarboxylic acid cycle. Functionally, membrane-anchoring subunit of succinate dehydrogenase (SDH) that is involved in complex II of the mitochondrial electron transport chain and is responsible for transferring electrons from succinate to ubiquinone (coenzyme Q). The chain is Succinate dehydrogenase cytochrome B subunit, mitochondrial (sdh3) from Schizosaccharomyces pombe (strain 972 / ATCC 24843) (Fission yeast).